Here is a 349-residue protein sequence, read N- to C-terminus: Ferredoxin--NADP reductase (349 aa).

D35, Q43, Y48, V88, F123, D288, and T329 together coordinate FAD.

Belongs to the ferredoxin--NADP reductase type 2 family. As to quaternary structure, homodimer. FAD serves as cofactor.

The catalysed reaction is 2 reduced [2Fe-2S]-[ferredoxin] + NADP(+) + H(+) = 2 oxidized [2Fe-2S]-[ferredoxin] + NADPH. The sequence is that of Ferredoxin--NADP reductase from Colwellia psychrerythraea (strain 34H / ATCC BAA-681) (Vibrio psychroerythus).